We begin with the raw amino-acid sequence, 965 residues long: Collagen alpha-1(I) chain (965 aa).

Positions 1–21 (SVPGPMGPSGPRGLPGPPGPG) are enriched in pro residues. A disordered region spans residues 1-965 (SVPGPMGPSG…PGPPGPPGPP (965 aa)). P15, P18, P20, P29, P32, P35, P49, P64, P70, P79, and P85 each carry 4-hydroxyproline. Residues 52-66 (NGDDGEAGKPGRPGE) show a composition bias toward basic and acidic residues. K88 bears the 5-hydroxylysine; alternate mark. K88 carries O-linked (Gal...) hydroxylysine; alternate glycosylation. S94 carries the post-translational modification Phosphoserine. Residues 102 to 118 (DAGPAGPKGEPGSPGEN) are compositionally biased toward low complexity. Residues P112, P115, P121, P130, P136, P157, P166, P169, P196, P199, P211, P217, P226, P232, P235, and P250 each carry the 4-hydroxyproline modification. The span at 136–154 (PGASGPAGARGNDGATGAA) shows a compositional bias: low complexity. Pro residues predominate over residues 156 to 168 (PPGPTGPAGPPGF). Low complexity predominate over residues 202 to 241 (AGAAGPAGNPGADGQPGAKGANGAPGIAGAPGFPGARGPS). K253 carries the 5-hydroxylysine modification. 4-hydroxyproline occurs at positions 259, 262, 273, 282, 297, 303, 312, and 318. Residues 307–327 (GERGGPGSRGFPGADGAGPKG) show a composition bias toward gly residues. At K326 the chain carries 5-hydroxylysine. Residues P335, P344, P350, P356, P365, P368, P377, P386, P392, P404, P413, P422, P425, P443, P460, P466, P472, P480, P492, P501, P509, P515, and P524 each carry the 4-hydroxyproline modification. A compositionally biased stretch (low complexity) spans 359–385 (KGLTGSPGSPGPDGKTGPPGPAGQDGR). Positions 394–413 (ARGQAGVMGFPGPKGAAGEP) are enriched in low complexity. Positions 472–482 (PGEADLGAPGP) are enriched in low complexity. Residue K536 is modified to 5-hydroxylysine. P542, P557, and P563 each carry 4-hydroxyproline. The segment covering 569–583 (SGPSGPAGPTGARGA) has biased composition (low complexity). Residue S572 is modified to Phosphoserine. P584, P590, P593, P602, P608, P626, P635, and P644 each carry 4-hydroxyproline. Positions 596–623 (AGFAGPPGADGQPGAKGEPGDAGAKGDA) are enriched in low complexity. The span at 625-637 (PPGPAGPTGPPGP) shows a compositional bias: pro residues. The residue at position 647 (K647) is a 5-hydroxylysine. Over residues 652–668 (SAGPPGATGFPGAAGRV) the composition is skewed to low complexity. A 4-hydroxyproline mark is found at P656 and P662. 3-hydroxyproline is present on P670. 16 positions are modified to 4-hydroxyproline: P671, P680, P683, P704, P713, P721, P730, P748, P757, P760, P766, P771, P777, P783, P791, and P797. The segment covering 697 to 706 (ETGPAGRPGE) has biased composition (low complexity). The span at 718–730 (KGSPGADGPAGAP) shows a compositional bias: low complexity. Residues 768 to 780 (KGPPGPMGPPGLA) show a composition bias toward pro residues. Position 806 is a 5-hydroxylysine (K806). Over residues 815 to 830 (SGPPGAPGAPGAPGPV) the composition is skewed to pro residues. 4-hydroxyproline is present on residues P818, P821, and P824. Residues 851 to 865 (AGPAGARGPAGPQGP) show a composition bias toward low complexity. Positions 866–880 (RGDKGETGEQGDRGI) are enriched in basic and acidic residues. At K869 the chain carries 5-hydroxylysine. Position 881 is a 5-hydroxylysine; alternate (K881). K881 carries an O-linked (Gal...) hydroxylysine; alternate glycan. P896, P899, P917, and P932 each carry 4-hydroxyproline. The span at 899–932 (PGEQGPSGASGPAGPRGPPGSAGSPGKDGLNGLP) shows a compositional bias: low complexity. A 3-hydroxyproline modification is found at P937. P938 bears the 4-hydroxyproline mark. Residues 950 to 965 (VGPPGPPGPPGPPGPP) are compositionally biased toward pro residues. P952 carries the 3-hydroxyproline modification. P953 bears the 4-hydroxyproline mark. P955 is modified (3-hydroxyproline). At P956 the chain carries 4-hydroxyproline. P958 carries the 3-hydroxyproline modification. Residues P959, P962, and P965 each carry the 4-hydroxyproline modification.

The protein belongs to the fibrillar collagen family. Trimers of one alpha 2(I) and two alpha 1(I) chains. Contains mostly 4-hydroxyproline. Proline residues at the third position of the tripeptide repeating unit (G-X-Y) are hydroxylated in some or all of the chains. In terms of processing, contains 3-hydroxyproline at a few sites. This modification occurs on the first proline residue in the sequence motif Gly-Pro-Hyp, where Hyp is 4-hydroxyproline. Post-translationally, lysine residues at the third position of the tripeptide repeating unit (G-X-Y) are 5-hydroxylated in some or all of the chains. O-glycosylated on hydroxylated lysine residues. The O-linked glycan consists of a Glc-Gal disaccharide. In terms of tissue distribution, expressed in bones.

Its subcellular location is the secreted. The protein resides in the extracellular space. It is found in the extracellular matrix. Functionally, type I collagen is a member of group I collagen (fibrillar forming collagen). In Scelidotherium sp. (strain SLP-2019) (South American ground sloth), this protein is Collagen alpha-1(I) chain.